Reading from the N-terminus, the 447-residue chain is Chromosomal replication initiator protein DnaA (447 aa).

Residues 1–74 (MPDVESFWHS…TGFKLTGAEV (74 aa)) form a domain I, interacts with DnaA modulators region. A domain II region spans residues 74–109 (VMPHFVVADEKDAALAQELEEPAEEEVVFSEQSKKA). The segment at 110–326 (MLNPKYTFDT…GALVRVQAFA (217 aa)) is domain III, AAA+ region. 4 residues coordinate ATP: Gly154, Gly156, Lys157, and Thr158. The domain IV, binds dsDNA stretch occupies residues 327 to 447 (TINGEDITTS…VSEIKNLLNS (121 aa)).

Belongs to the DnaA family. In terms of assembly, oligomerizes as a right-handed, spiral filament on DNA at oriC.

The protein localises to the cytoplasm. Plays an essential role in the initiation and regulation of chromosomal replication. ATP-DnaA binds to the origin of replication (oriC) to initiate formation of the DNA replication initiation complex once per cell cycle. Binds the DnaA box (a 9 base pair repeat at the origin) and separates the double-stranded (ds)DNA. Forms a right-handed helical filament on oriC DNA; dsDNA binds to the exterior of the filament while single-stranded (ss)DNA is stabiized in the filament's interior. The ATP-DnaA-oriC complex binds and stabilizes one strand of the AT-rich DNA unwinding element (DUE), permitting loading of DNA polymerase. After initiation quickly degrades to an ADP-DnaA complex that is not apt for DNA replication. Binds acidic phospholipids. Its function is as follows. Strand separation requires the DnaA boxes and adjacent DnaA-trio motifs as well as ATP. The polypeptide is Chromosomal replication initiator protein DnaA (Enterococcus faecalis (strain ATCC 700802 / V583)).